A 180-amino-acid polypeptide reads, in one-letter code: MGDPKRQRKKYETPPHPWIKERLDRERVLMDKYELKNKKELWKHETQLKNFRRRARRLLAARGKQAEIEREQLLSRLKRLGLLPEDAVLDDVLSLTVEDILERRLQTIVYKKGLARTMRQARQLIVHGHIEVNGQIIRSPSYLVLKEEEDKITYARTSPFANPQHPERMMIEKAKQGGEA.

An S4 RNA-binding domain is found at 103-174; that stretch reads RRLQTIVYKK…HPERMMIEKA (72 aa).

Belongs to the universal ribosomal protein uS4 family. Part of the 30S ribosomal subunit. Contacts protein S5. The interaction surface between S4 and S5 is involved in control of translational fidelity.

One of the primary rRNA binding proteins, it binds directly to 16S rRNA where it nucleates assembly of the body of the 30S subunit. Functionally, with S5 and S12 plays an important role in translational accuracy. This is Small ribosomal subunit protein uS4 from Pyrococcus horikoshii (strain ATCC 700860 / DSM 12428 / JCM 9974 / NBRC 100139 / OT-3).